The chain runs to 478 residues: 2,5-dioxopentanoate dehydrogenase (478 aa).

Residues 148 to 149, 172 to 175, and 225 to 226 contribute to the NADP(+) site; these read WN, KPAT, and GS. Catalysis depends on Glu249, which acts as the Proton acceptor. Cys283 functions as the Nucleophile in the catalytic mechanism. Residue Glu379 participates in NADP(+) binding.

This sequence belongs to the aldehyde dehydrogenase family. As to quaternary structure, homotetramer.

It carries out the reaction 2,5-dioxopentanoate + NADP(+) + H2O = 2-oxoglutarate + NADPH + 2 H(+). Its function is as follows. 2,5-dioxopentanoate dehydrogenase involved in the degradation of pentoses such as D-arabinose or D-xylose, a major component of hemicelluloses such as xylan. Catalyzes the fifth reaction in the pentose utilization pathway through dehydratation of 2,5-dioxopentanoate into 2-oxoglutarate. Also shows dehydrogenase activity toward glycolaldehyde and DL-glyceraldehyde. The sequence is that of 2,5-dioxopentanoate dehydrogenase from Saccharolobus solfataricus (strain ATCC 35092 / DSM 1617 / JCM 11322 / P2) (Sulfolobus solfataricus).